The chain runs to 206 residues: Ribosomal RNA large subunit methyltransferase E (206 aa).

Residues G60, W62, D80, D96, and D121 each contribute to the S-adenosyl-L-methionine site. The active-site Proton acceptor is K161.

Belongs to the class I-like SAM-binding methyltransferase superfamily. RNA methyltransferase RlmE family.

It localises to the cytoplasm. The enzyme catalyses uridine(2552) in 23S rRNA + S-adenosyl-L-methionine = 2'-O-methyluridine(2552) in 23S rRNA + S-adenosyl-L-homocysteine + H(+). In terms of biological role, specifically methylates the uridine in position 2552 of 23S rRNA at the 2'-O position of the ribose in the fully assembled 50S ribosomal subunit. This chain is Ribosomal RNA large subunit methyltransferase E, found in Legionella pneumophila (strain Lens).